A 230-amino-acid chain; its full sequence is MAHPSQLGFQDAASPVMEELLHFHDHTLMIVFLISTLVLYIIMAMVSTKLTNKYILDSQEIEIVWTILPAVILIMIALPSLRILYLMDEINDPHLTIKAMGHQWYWSYEYTDYEDLGFDSYMIQTQDLTPGQFRLLETDHRMVVPMESPIRVLVSAEDVLHSWTVPALGVKMDAVPGRLNQTAFIISRPGVYYGQCSEICGANHSFMPIVVEAVPLEHFESWSSLMLEEA.

At 1–14 (MAHPSQLGFQDAAS) the chain is on the mitochondrial intermembrane side. Residues 15 to 45 (PVMEELLHFHDHTLMIVFLISTLVLYIIMAM) form a helical membrane-spanning segment. At 46 to 59 (VSTKLTNKYILDSQ) the chain is on the mitochondrial matrix side. A helical transmembrane segment spans residues 60 to 87 (EIEIVWTILPAVILIMIALPSLRILYLM). The Mitochondrial intermembrane portion of the chain corresponds to 88–230 (DEINDPHLTI…SWSSLMLEEA (143 aa)). Positions 161, 196, 198, 200, 204, and 207 each coordinate Cu cation. Mg(2+) is bound at residue Glu198.

It belongs to the cytochrome c oxidase subunit 2 family. In terms of assembly, component of the cytochrome c oxidase (complex IV, CIV), a multisubunit enzyme composed of 14 subunits. The complex is composed of a catalytic core of 3 subunits MT-CO1, MT-CO2 and MT-CO3, encoded in the mitochondrial DNA, and 11 supernumerary subunits COX4I, COX5A, COX5B, COX6A, COX6B, COX6C, COX7A, COX7B, COX7C, COX8 and NDUFA4, which are encoded in the nuclear genome. The complex exists as a monomer or a dimer and forms supercomplexes (SCs) in the inner mitochondrial membrane with NADH-ubiquinone oxidoreductase (complex I, CI) and ubiquinol-cytochrome c oxidoreductase (cytochrome b-c1 complex, complex III, CIII), resulting in different assemblies (supercomplex SCI(1)III(2)IV(1) and megacomplex MCI(2)III(2)IV(2)). Found in a complex with TMEM177, COA6, COX18, COX20, SCO1 and SCO2. Interacts with TMEM177 in a COX20-dependent manner. Interacts with COX20. Interacts with COX16. Cu cation is required as a cofactor.

The protein resides in the mitochondrion inner membrane. It carries out the reaction 4 Fe(II)-[cytochrome c] + O2 + 8 H(+)(in) = 4 Fe(III)-[cytochrome c] + 2 H2O + 4 H(+)(out). Component of the cytochrome c oxidase, the last enzyme in the mitochondrial electron transport chain which drives oxidative phosphorylation. The respiratory chain contains 3 multisubunit complexes succinate dehydrogenase (complex II, CII), ubiquinol-cytochrome c oxidoreductase (cytochrome b-c1 complex, complex III, CIII) and cytochrome c oxidase (complex IV, CIV), that cooperate to transfer electrons derived from NADH and succinate to molecular oxygen, creating an electrochemical gradient over the inner membrane that drives transmembrane transport and the ATP synthase. Cytochrome c oxidase is the component of the respiratory chain that catalyzes the reduction of oxygen to water. Electrons originating from reduced cytochrome c in the intermembrane space (IMS) are transferred via the dinuclear copper A center (CU(A)) of subunit 2 and heme A of subunit 1 to the active site in subunit 1, a binuclear center (BNC) formed by heme A3 and copper B (CU(B)). The BNC reduces molecular oxygen to 2 water molecules using 4 electrons from cytochrome c in the IMS and 4 protons from the mitochondrial matrix. The chain is Cytochrome c oxidase subunit 2 (MT-CO2) from Squalus acanthias (Spiny dogfish).